The following is a 540-amino-acid chain: MYYLNKMLEYNKENGIIINKYIRKTIQKQIRIHNKYIYRYDRVTQAIEWIEDNFYLTTGNLMKIELLPTQRWWYELMLGYDMIDEKGVQVNLINEIFLNLGRGSGKSSLMATRVLNWMILGGQYGGESLVIAYDNTQARHVFDQVRNQTEASDTLRVYNENKIFKSTKQGLEFASFKTTFKKQTNDTLRAQGGNSSLNIFDEVHTYGEDITESVNKGSRQKQDNWQSIYITSGGLKRDGLYDKLVERFKSEEEFYNDRSFGLLYMLENHEQVKDKKNWTMALPLIGSVPKWSGVIEEYELAQGDPALQNKFLAFNMGLPMQDTAYYFTPQDTKLTDFNLSVFNKNRTYVGIDLSLIGDLTAVSFVCELEGKTYSHTLTFSVRSQYEQLDTEQQELWTEFVDRGELILLDTEYINVNDLIPHINDFRTKTGCRLRKIGYDPARYEILKGLIERYFFDKDGDNQRAIRQGFSMNDYIKLLKSKLVENKLIHNQKVMQWALNNTAVKIGQSGDYMYTKKLEKDKIDPTVALTMALEMAVSDEV.

Residues Asp352, Asp424, and Asp523 each contribute to the Mn(2+) site.

This sequence belongs to the skunavirus terminase large subunit family. Interacts with the terminase small subunit; the active complex is probably heterooligomeric. Mn(2+) is required as a cofactor. It depends on Mg(2+) as a cofactor.

Functionally, the terminase large subunit acts as an ATP driven molecular motor necessary for viral DNA translocation into empty capsids and as an endonuclease that cuts the viral genome to initiate and to end a packaging reaction. The terminase lies at a unique vertex of the procapsid and is composed of two subunits, a small terminase subunit involved in viral DNA recognition (packaging sequence), and a large terminase subunit possessing endonucleolytic and ATPase activities. Both terminase subunits heterooligomerize and are docked on the portal protein to form the packaging machine. The terminase large subunit exhibits endonuclease activity and cleaves the viral genome concatemer. The chain is Terminase large subunit from Lactococcus lactis (Lactococcus lactis bacteriophage SK1).